The primary structure comprises 473 residues: FAD-dependent monooxygeanse terM (473 aa).

The signal sequence occupies residues 1–22; it reads MSENFKVLIIGGSVAGLTLALC. FAD-binding residues include Glu34, Gly48, Arg107, Asp303, and Ala316. Residues 441 to 461 traverse the membrane as a helical segment; that stretch reads VLYLICGALLAWWASGLVWHF.

This sequence belongs to the paxM FAD-dependent monooxygenase family. Requires FAD as cofactor.

It is found in the membrane. Its pathway is secondary metabolite biosynthesis. Functionally, FAD-dependent monooxygeanse; part of the gene cluster that mediates the biosynthesis of terpendoles, indole-diterpene (IDT) mycotoxins including terpendole I, terpendole K, terpendole C, as well as the kinesin Eg5 inhibitor terpendole E. Terpendoles biosynthesis begins with the synthesis of geranylgeranyl diphosphate (GGPP) by a yet unidentified GGPP synthase. Condensation of indole-3-glycerol phosphate with GGPP by the prenyltransferase terC then forms 3-geranylgeranylindole (3-GGI), followed by epoxidation and cyclization of this intermediate (by the FAD-dependent monooxygeanse terM and the terpene cyclase terB) to form paspaline. The cytochrome monooxygenase terQ then hydroxylates paspalline at C-11 to yield terpendole E. The cytochrome monooxygenase terP converts terpendole E to 13-desoxyterpendole I, and terQ converts 13-desoxyterpendole I into terpendole I. TerF and terK are required for conversion of terpendole I to terpendole C which is further converted to terpendole K. This chain is FAD-dependent monooxygeanse terM, found in Tolypocladium album (Soil fungus).